The chain runs to 353 residues: Quinolinate synthase (353 aa).

Positions 47 and 68 each coordinate iminosuccinate. C113 contacts [4Fe-4S] cluster. Iminosuccinate-binding positions include 139-141 (YAN) and S156. C200 is a [4Fe-4S] cluster binding site. Residues 226-228 (HPE) and T243 each bind iminosuccinate. Residue C297 participates in [4Fe-4S] cluster binding.

Belongs to the quinolinate synthase family. Type 1 subfamily. Requires [4Fe-4S] cluster as cofactor.

It is found in the cytoplasm. It catalyses the reaction iminosuccinate + dihydroxyacetone phosphate = quinolinate + phosphate + 2 H2O + H(+). Its pathway is cofactor biosynthesis; NAD(+) biosynthesis; quinolinate from iminoaspartate: step 1/1. Its function is as follows. Catalyzes the condensation of iminoaspartate with dihydroxyacetone phosphate to form quinolinate. This Vibrio parahaemolyticus serotype O3:K6 (strain RIMD 2210633) protein is Quinolinate synthase.